The following is a 361-amino-acid chain: Serine/threonine-protein kinase SRK2B (361 aa).

The Protein kinase domain occupies Y4 to F260. Residues I10 to A18 and K33 contribute to the ATP site. The active-site Proton acceptor is the D123. S154 is modified (phosphoserine). The segment at A311 to S361 is disordered. Residues E318–Y344 show a composition bias toward acidic residues.

The protein belongs to the protein kinase superfamily. Ser/Thr protein kinase family. As to expression, expressed in seedlings.

The enzyme catalyses L-seryl-[protein] + ATP = O-phospho-L-seryl-[protein] + ADP + H(+). It carries out the reaction L-threonyl-[protein] + ATP = O-phospho-L-threonyl-[protein] + ADP + H(+). This Arabidopsis thaliana (Mouse-ear cress) protein is Serine/threonine-protein kinase SRK2B (SRK2B).